Reading from the N-terminus, the 135-residue chain is C-type lectin BPL (135 aa).

Cystine bridges form between C3–C14, C31–C131, C38–C133, and C106–C123. Residues 10-132 form the C-type lectin domain; that stretch reads MNGLCYKIFN…CESKNAFLCQ (123 aa). Ca(2+) is bound by residues Q96, D98, E104, and D120. Positions 96–98 match the Galactose-binding motif; it reads QPD.

Belongs to the true venom lectin family. In terms of assembly, homodimer; disulfide-linked. In terms of tissue distribution, expressed by the venom gland.

It localises to the secreted. Functionally, galactose-binding protein which recognizes specific carbohydrate structures and agglutinates a variety of animal cells by binding to cell-surface glycoproteins and glycolipids. Calcium-dependent lectin. Shows high hemagglutinating activity in the presence of human erythrocytes, which are agglutinated with a minimum hemagglutination concentration (MHC) of 2.5-0.35 ug/ml. Causes indirect nephrotoxicity. Causes reductions in perfusion pressures, renal vascular resistance, urinary flow, glomerular filtration rate, sodium, potassium and chloride tubular transport. Its effects may be caused by the release of inflammatory mediators. This is C-type lectin BPL from Bothrops pirajai (Piraja's lancehead).